Reading from the N-terminus, the 205-residue chain is Glycerol-3-phosphate acyltransferase (205 aa).

6 helical membrane-spanning segments follow: residues 8–28, 57–77, 84–104, 118–138, 143–163, and 164–184; these read IALF…GYLA, TPAL…ILIA, ESLQ…PVWL, VFLG…LLIL, IVSL…LINS, and KETF…LVLW.

It belongs to the PlsY family. In terms of assembly, probably interacts with PlsX.

The protein localises to the cell inner membrane. It catalyses the reaction an acyl phosphate + sn-glycerol 3-phosphate = a 1-acyl-sn-glycero-3-phosphate + phosphate. It functions in the pathway lipid metabolism; phospholipid metabolism. Catalyzes the transfer of an acyl group from acyl-phosphate (acyl-PO(4)) to glycerol-3-phosphate (G3P) to form lysophosphatidic acid (LPA). This enzyme utilizes acyl-phosphate as fatty acyl donor, but not acyl-CoA or acyl-ACP. This Prochlorococcus marinus (strain SARG / CCMP1375 / SS120) protein is Glycerol-3-phosphate acyltransferase.